Consider the following 282-residue polypeptide: MAQPLREVLVWLNNKIKEINPESAWLEAELLVAFVLNKDRAFIYTIDFLTDEEVEKLKKLLDLRKKGIPLNYIIEKKQFYDIELFVERGVLIPRSETEILIEVAKDTILKEGYKKIVEIGVGSGNISITLAKEFKDIKIYACDISPEAIKVARFNAKKHKVSDKIEFFFGFLLYPMVHRNVDFELIISNPPYIASWEFPFLQKEVKKEPWKALYGGWDGCEFYRKLFTLLKKRGKNFTAILEISPYIYHKVLNILKNFFDSVIIESFRDYLGHERVIKVIWH.

S-adenosyl-L-methionine is bound by residues 120-124 (GVGSG), aspartate 143, and asparagine 189. 189–192 (NPPY) provides a ligand contact to substrate.

It belongs to the protein N5-glutamine methyltransferase family. PrmC subfamily.

The catalysed reaction is L-glutaminyl-[peptide chain release factor] + S-adenosyl-L-methionine = N(5)-methyl-L-glutaminyl-[peptide chain release factor] + S-adenosyl-L-homocysteine + H(+). In terms of biological role, methylates the class 1 translation termination release factors RF1/PrfA and RF2/PrfB on the glutamine residue of the universally conserved GGQ motif. This Dictyoglomus turgidum (strain DSM 6724 / Z-1310) protein is Release factor glutamine methyltransferase.